Here is a 22-residue protein sequence, read N- to C-terminus: Cytin chain B (22 aa).

Belongs to the protease inhibitor I13 (potato type I serine protease inhibitor) family. In terms of assembly, heterodimer of an A chain and a B chain, linked by a disulfide bond.

Inhibitor of chymotrypsin. This chain is Cytin chain B, found in Theromyzon tessulatum (Duck leech).